Reading from the N-terminus, the 366-residue chain is Palmitoyltransferase ZDHHC2 (366 aa).

Residues 1 to 15 (MAPSGSGGVRRRCRR) are Cytoplasmic-facing. The helical transmembrane segment at 16–36 (VLYWIPVVFISLLLGWSYYAY) threads the bilayer. Over 37-47 (AIQLCIVSMEN) the chain is Lumenal. A helical transmembrane segment spans residues 48 to 68 (IGEQVVCLMAYHLLFAMFVWS). The Cytoplasmic segment spans residues 69–169 (YWKTIFTLPM…NNCVGFSNYK (101 aa)). The 51-residue stretch at 126-176 (RYCDRCQLIKPDRCHHCSVCDKCILKMDHHCPWVNNCVGFSNYKFFLLFLA) folds into the DHHC domain. The S-palmitoyl cysteine intermediate role is filled by Cys156. The helical transmembrane segment at 170-190 (FFLLFLAYSLLYCLFIAATDL) threads the bilayer. Residues 191–207 (QYFIRFWTNGLPDTQAK) are Lumenal-facing. A helical membrane pass occupies residues 208–228 (FHIMFLFFAAAMFSVSLSSLF). The Cytoplasmic segment spans residues 229–366 (GYHCWLVSKN…NPALTMENET (138 aa)). Polar residues predominate over residues 297-316 (VNQDPEQPSTPAGLNSTVKN). A disordered region spans residues 297-366 (VNQDPEQPST…NPALTMENET (70 aa)). Positions 298–366 (NQDPEQPSTP…NPALTMENET (69 aa)) are mediates localization to plasma membrane and recycling endosomes. The segment covering 326-336 (PLRESQSHLLK) has biased composition (basic and acidic residues). The Non-canonical dileucine endocytic signal signature appears at 334–335 (LL). A compositionally biased stretch (polar residues) spans 337–347 (DSQTWTESSAN). An NPxY-like endocytic signal motif is present at residues 357–360 (NPAL).

The protein belongs to the DHHC palmitoyltransferase family. Monomer. Homodimer. The monomeric form has a higher catalytic activity. Autopalmitoylated. Expressed in all brain regions.

It localises to the postsynaptic density. It is found in the postsynaptic recycling endosome membrane. The protein resides in the cell membrane. Its subcellular location is the endoplasmic reticulum membrane. The protein localises to the golgi apparatus membrane. The enzyme catalyses L-cysteinyl-[protein] + hexadecanoyl-CoA = S-hexadecanoyl-L-cysteinyl-[protein] + CoA. The catalysed reaction is L-cysteinyl-[protein] + tetradecanoyl-CoA = S-tetradecanoyl-L-cysteinyl-[protein] + CoA. It carries out the reaction L-cysteinyl-[protein] + octadecanoyl-CoA = S-octadecanoyl-L-cysteinyl-[protein] + CoA. In terms of biological role, palmitoyltransferase that catalyzes the addition of palmitate onto various protein substrates and is involved in a variety of cellular processes. Has no stringent fatty acid selectivity and in addition to palmitate can also transfer onto target proteins myristate from tetradecanoyl-CoA and stearate from octadecanoyl-CoA. In the nervous system, plays a role in long term synaptic potentiation by palmitoylating AKAP5 through which it regulates protein trafficking from the dendritic recycling endosomes to the plasma membrane and controls both structural and functional plasticity at excitatory synapses. In dendrites, mediates the palmitoylation of DLG4 when synaptic activity decreases and induces synaptic clustering of DLG4 and associated AMPA-type glutamate receptors. Also mediates the de novo and turnover palmitoylation of RGS7BP, a shuttle for Gi/o-specific GTPase-activating proteins/GAPs, promoting its localization to the plasma membrane in response to the activation of G protein-coupled receptors. Through the localization of these GTPase-activating proteins/GAPs, it also probably plays a role in G protein-coupled receptors signaling in neurons. Also probably plays a role in cell adhesion by palmitoylating CD9 and CD151 to regulate their expression and function. Palmitoylates the endoplasmic reticulum protein CKAP4 and regulates its localization to the plasma membrane. Could also palmitoylate LCK and regulate its localization to the plasma membrane. This chain is Palmitoyltransferase ZDHHC2, found in Mus musculus (Mouse).